The primary structure comprises 284 residues: D-tagatose-1,6-bisphosphate aldolase subunit GatY (284 aa).

Asp82 functions as the Proton donor in the catalytic mechanism. His83 and His180 together coordinate Zn(2+). Gly181 lines the dihydroxyacetone phosphate pocket. His208 serves as a coordination point for Zn(2+). Residues 209–211 (GAS) and 230–233 (NVAT) contribute to the dihydroxyacetone phosphate site.

This sequence belongs to the class II fructose-bisphosphate aldolase family. TagBP aldolase GatY subfamily. In terms of assembly, forms a complex with GatZ. The cofactor is Zn(2+).

It catalyses the reaction D-tagatofuranose 1,6-bisphosphate = D-glyceraldehyde 3-phosphate + dihydroxyacetone phosphate. It functions in the pathway carbohydrate metabolism; D-tagatose 6-phosphate degradation; D-glyceraldehyde 3-phosphate and glycerone phosphate from D-tagatose 6-phosphate: step 2/2. Its function is as follows. Catalytic subunit of the tagatose-1,6-bisphosphate aldolase GatYZ, which catalyzes the reversible aldol condensation of dihydroxyacetone phosphate (DHAP or glycerone-phosphate) with glyceraldehyde 3-phosphate (G3P) to produce tagatose 1,6-bisphosphate (TBP). Requires GatZ subunit for full activity and stability. Is involved in the catabolism of galactitol. The chain is D-tagatose-1,6-bisphosphate aldolase subunit GatY from Escherichia coli (strain SMS-3-5 / SECEC).